We begin with the raw amino-acid sequence, 275 residues long: MDYEVCRKVWESHVPCQFTLQSSGGTHGEPLPFYTMLPRFSYLALAIQKVLSSFNRRDDGEKVHSDKMWLEHNGIPLKMYIPIGVIYDQANLSENDSILEIIVRTSQPPPQFQMVDRDMMEAMFMQNIKEADYLKTKAEITKNMMKDESAQLWRSVCNIPDNFDEFWTIVQKLMETSEGNEFAHIPLRVYVKNQAFKQALITAKHPDGSLRTIGEAVSDVLSSSSSSSTDSQSEHPPRLISHGIDIPHHTPLIFAAKNLSYPDNFIHVVLLLVVP.

Residue lysine 129 forms a Glycyl lysine isopeptide (Lys-Gly) (interchain with G-Cter in lgg-3/ATG12) linkage. The segment covering 221–231 has biased composition (low complexity); that stretch reads LSSSSSSSTDS. The interval 221–241 is disordered; the sequence is LSSSSSSSTDSQSEHPPRLIS.

This sequence belongs to the ATG5 family. Most likely a component of a complex at least containing atg-5, lgg-3/ATG12, atg-16.1 and/or atg-16.2. Interacts with lgg-3/ATG12. Interacts with atg-16.1 (via N-terminus) and atg-16.2 (via N-terminus). Conjugated to lgg-3/ATG12; which is essential for autophagy.

The protein localises to the preautophagosomal structure membrane. Functionally, involved in autophagic vesicle formation. Conjugation with lgg-3/ATG12, through a ubiquitin-like conjugating system involving atg-7 as an E1-like activating enzyme and atg-10 as an E2-like conjugating enzyme, is essential for its function. Most likely a component of an atg-5-lgg-3-atg-16 complex that promotes autophagosome formation by associating with lgg-2, but not lgg-1, at the preautophagosomal membrane. Probably, as part of an atg-5-lgg-3-atg-16 complex, required for lgg-1 lipidation; the complex acts as an E3-like enzyme promoting atg-3-mediated lgg-1 lipidation. Furthermore, association with atg-16.2 is required for the nucleation of lgg-1 positive autophagic vesicles. In Caenorhabditis elegans, this protein is Autophagy-related protein 5.